Reading from the N-terminus, the 554-residue chain is Glucose-6-phosphate isomerase (554 aa).

The active-site Proton donor is the E359. Active-site residues include H390 and K518.

The protein belongs to the GPI family.

The protein resides in the cytoplasm. It catalyses the reaction alpha-D-glucose 6-phosphate = beta-D-fructose 6-phosphate. It participates in carbohydrate biosynthesis; gluconeogenesis. The protein operates within carbohydrate degradation; glycolysis; D-glyceraldehyde 3-phosphate and glycerone phosphate from D-glucose: step 2/4. Its function is as follows. Catalyzes the reversible isomerization of glucose-6-phosphate to fructose-6-phosphate. In Pseudomonas putida (strain ATCC 700007 / DSM 6899 / JCM 31910 / BCRC 17059 / LMG 24140 / F1), this protein is Glucose-6-phosphate isomerase.